The chain runs to 89 residues: Sec-independent protein translocase protein TatA (89 aa).

The chain crosses the membrane as a helical span at residues 1-21 (MGGISIWQLLIIALIVVLLFG). Positions 47–61 (EEKKALEENATDKPA) are enriched in basic and acidic residues. The tract at residues 47-89 (EEKKALEENATDKPAADTAKVTETAKVAETAEKKAESKGKEQA) is disordered. Over residues 62–74 (ADTAKVTETAKVA) the composition is skewed to low complexity. Positions 75 to 89 (ETAEKKAESKGKEQA) are enriched in basic and acidic residues.

It belongs to the TatA/E family. The Tat system comprises two distinct complexes: a TatABC complex, containing multiple copies of TatA, TatB and TatC subunits, and a separate TatA complex, containing only TatA subunits. Substrates initially bind to the TatABC complex, which probably triggers association of the separate TatA complex to form the active translocon.

It localises to the cell inner membrane. In terms of biological role, part of the twin-arginine translocation (Tat) system that transports large folded proteins containing a characteristic twin-arginine motif in their signal peptide across membranes. TatA could form the protein-conducting channel of the Tat system. This Shewanella pealeana (strain ATCC 700345 / ANG-SQ1) protein is Sec-independent protein translocase protein TatA.